The primary structure comprises 252 residues: Imidazole glycerol phosphate synthase subunit HisF (252 aa).

Catalysis depends on residues D11 and D130.

It belongs to the HisA/HisF family. As to quaternary structure, heterodimer of HisH and HisF.

Its subcellular location is the cytoplasm. It carries out the reaction 5-[(5-phospho-1-deoxy-D-ribulos-1-ylimino)methylamino]-1-(5-phospho-beta-D-ribosyl)imidazole-4-carboxamide + L-glutamine = D-erythro-1-(imidazol-4-yl)glycerol 3-phosphate + 5-amino-1-(5-phospho-beta-D-ribosyl)imidazole-4-carboxamide + L-glutamate + H(+). Its pathway is amino-acid biosynthesis; L-histidine biosynthesis; L-histidine from 5-phospho-alpha-D-ribose 1-diphosphate: step 5/9. In terms of biological role, IGPS catalyzes the conversion of PRFAR and glutamine to IGP, AICAR and glutamate. The HisF subunit catalyzes the cyclization activity that produces IGP and AICAR from PRFAR using the ammonia provided by the HisH subunit. The chain is Imidazole glycerol phosphate synthase subunit HisF from Bacillus cereus (strain ZK / E33L).